The primary structure comprises 86 residues: MDNPFENGMKACTSLYDKYYQNCVMKLPPGACIDSENYRKCLTNHIGSCDIDTCFEDVSIACRSIYPSNYAECATTHHNICGDLQG.

The sequence is that of Allergen Hum j 3 from Humulus japonicus (Japanese hop).